Consider the following 305-residue polypeptide: tRNA pseudouridine synthase B (305 aa).

Asp-39 functions as the Nucleophile in the catalytic mechanism.

Belongs to the pseudouridine synthase TruB family. Type 1 subfamily.

The catalysed reaction is uridine(55) in tRNA = pseudouridine(55) in tRNA. Functionally, responsible for synthesis of pseudouridine from uracil-55 in the psi GC loop of transfer RNAs. In Staphylococcus aureus (strain MW2), this protein is tRNA pseudouridine synthase B.